Reading from the N-terminus, the 133-residue chain is ATP synthase epsilon chain (133 aa).

It belongs to the ATPase epsilon chain family. In terms of assembly, F-type ATPases have 2 components, CF(1) - the catalytic core - and CF(0) - the membrane proton channel. CF(1) has five subunits: alpha(3), beta(3), gamma(1), delta(1), epsilon(1). CF(0) has three main subunits: a, b and c.

It localises to the cell membrane. Produces ATP from ADP in the presence of a proton gradient across the membrane. The chain is ATP synthase epsilon chain (atpC) from Mycoplasma genitalium (strain ATCC 33530 / DSM 19775 / NCTC 10195 / G37) (Mycoplasmoides genitalium).